We begin with the raw amino-acid sequence, 133 residues long: FPRL1 inhibitory protein (133 aa).

Positions 1–28 are cleaved as a signal peptide; that stretch reads MKKNITKTIIASTVIAAGLLTQTNDAKA.

The protein belongs to the CHIPS/FLIPr family.

The protein resides in the secreted. May be involved in countering the first line of host defense mechanisms. Impairs the leukocyte response to FPRL1 agonists by binding directly to host FPRL1. Exerts, in vitro, anti-inflammatory activity by inhibiting calcium mobilization and cell migration toward chemoattractants. The chain is FPRL1 inhibitory protein (flr) from Staphylococcus aureus (strain Newman).